The following is an 887-amino-acid chain: Golgin IMH1 (887 aa).

Disordered regions lie at residues 16–50 (LAKG…EELP), 142–214 (QESL…MKSQ), 240–301 (GASQ…SAGD), and 783–822 (LKMS…SISS). Basic and acidic residues-rich tracts occupy residues 37-50 (GRRE…EELP) and 145-210 (LEQR…HAAE). A coiled-coil region spans residues 118–241 (AMLTEEIKRI…YKSTIQELGA (124 aa)). The segment covering 240–254 (GASQATGEAQPSSEA) has biased composition (polar residues). Residues 258-273 (RGKKGKGKRGKGKKRV) are compositionally biased toward basic residues. The stretch at 299–788 (AGDEIIEAIE…LSTQLKMSKD (490 aa)) forms a coiled coil. Residues 788–807 (DMSSQSRHSSRSGSLVSPSS) show a composition bias toward low complexity. The segment covering 808-822 (DNETGNSPRKISISS) has biased composition (polar residues). The region spanning 837–885 (EMESNEKLAYIRNVLLGFLEHREQRSQLLPVVSTLLQLSSHDEKRLLTS) is the GRIP domain.

It localises to the cytoplasm. The protein resides in the golgi apparatus membrane. In terms of biological role, involved in vesicular transport between an endosomal compartment and the Golgi apparatus. This Eremothecium gossypii (strain ATCC 10895 / CBS 109.51 / FGSC 9923 / NRRL Y-1056) (Yeast) protein is Golgin IMH1 (IMH1).